The sequence spans 521 residues: NAD(P)H-quinone oxidoreductase subunit 2 (521 aa).

14 helical membrane passes run 15 to 35 (ILPE…DITF), 42 to 62 (WTPY…YTQW), 79 to 99 (LSIV…LMSV), 109 to 126 (IGEF…AMFL), 131 to 153 (ELVM…TGYM), 167 to 187 (LLIG…LYGL), 208 to 228 (LALV…IAAV), 242 to 262 (PTPV…ALAI), 276 to 296 (WQFI…VVAI), 304 to 324 (MLAY…VIGT), 332 to 352 (VFYL…VILF), 376 to 396 (LALS…GFFG), 398 to 418 (LYLF…LGLI), and 464 to 484 (VGLV…NPLL).

It belongs to the complex I subunit 2 family. NDH-1 can be composed of about 15 different subunits; different subcomplexes with different compositions have been identified which probably have different functions.

Its subcellular location is the cellular thylakoid membrane. The catalysed reaction is a plastoquinone + NADH + (n+1) H(+)(in) = a plastoquinol + NAD(+) + n H(+)(out). The enzyme catalyses a plastoquinone + NADPH + (n+1) H(+)(in) = a plastoquinol + NADP(+) + n H(+)(out). NDH-1 shuttles electrons from an unknown electron donor, via FMN and iron-sulfur (Fe-S) centers, to quinones in the respiratory and/or the photosynthetic chain. The immediate electron acceptor for the enzyme in this species is believed to be plastoquinone. Couples the redox reaction to proton translocation, and thus conserves the redox energy in a proton gradient. Cyanobacterial NDH-1 also plays a role in inorganic carbon-concentration. The sequence is that of NAD(P)H-quinone oxidoreductase subunit 2 from Acaryochloris marina (strain MBIC 11017).